The primary structure comprises 372 residues: Glutamate 5-kinase (372 aa).

ATP is bound at residue K14. Residues S54, D141, and N153 each coordinate substrate. ATP contacts are provided by residues 173 to 174 (TD) and 215 to 221 (TGGMATK). A PUA domain is found at 280-358 (RGQVVLDTGA…DNIEEILGYD (79 aa)).

It belongs to the glutamate 5-kinase family.

Its subcellular location is the cytoplasm. The enzyme catalyses L-glutamate + ATP = L-glutamyl 5-phosphate + ADP. The protein operates within amino-acid biosynthesis; L-proline biosynthesis; L-glutamate 5-semialdehyde from L-glutamate: step 1/2. Functionally, catalyzes the transfer of a phosphate group to glutamate to form L-glutamate 5-phosphate. This is Glutamate 5-kinase from Shewanella halifaxensis (strain HAW-EB4).